A 450-amino-acid chain; its full sequence is Putative zinc metalloprotease TP_0600 (450 aa).

Residue histidine 18 participates in Zn(2+) binding. Residue glutamate 19 is part of the active site. Histidine 22 lines the Zn(2+) pocket. A helical transmembrane segment spans residues 102-124 (IAFAGPLANVLMAVMVLALVSAL). In terms of domain architecture, PDZ spans 200 to 278 (TITPDRDAHT…SVVLTVLRSG (79 aa)). The next 2 helical transmembrane spans lie at 384–406 (VCVSLFIMNLLPIPILDGGLILF) and 421–443 (VLYYLQFVGFAFVALIFLCAFWN).

This sequence belongs to the peptidase M50B family. Zn(2+) serves as cofactor.

The protein localises to the cell inner membrane. This Treponema pallidum (strain Nichols) protein is Putative zinc metalloprotease TP_0600.